We begin with the raw amino-acid sequence, 439 residues long: Fibulin-7 (439 aa).

Positions M1–S24 are cleaved as a signal peptide. The stretch at L28–E53 forms a coiled coil. The 58-residue stretch at V79–G136 folds into the Sushi domain. 11 disulfide bridges follow: C81–C121, C107–C134, C140–C151, C145–C160, C162–C171, C228–C244, C240–C253, C255–C268, C274–C287, C281–C296, and C301–C318. N124 carries N-linked (GlcNAc...) asparagine glycosylation. Residues G136–Q172 enclose the EGF-like 1; calcium-binding domain. Residues D224–E269 enclose the EGF-like 2; calcium-binding domain. In terms of domain architecture, EGF-like 3; calcium-binding spans D270–E319. A glycan (N-linked (GlcNAc...) asparagine) is linked at N307.

This sequence belongs to the fibulin family. Interacts with heparin, FBLN1, FN1 and DSPP. Preferentially binds dental mesenchyme cells and odontoblasts but not dental epithelial cells or nondental cells. Binding requires a heparan sulfate-containing receptor on the cell surface as well as an integrin. N-glycosylated.

It localises to the secreted. The protein resides in the extracellular space. It is found in the extracellular matrix. In terms of biological role, an adhesion molecule that interacts with extracellular matrix molecules in developing teeth and may play important roles in differentiation and maintenance of odontoblasts as well as in dentin formation. The protein is Fibulin-7 (FBLN7) of Homo sapiens (Human).